Reading from the N-terminus, the 244-residue chain is Purine nucleoside phosphorylase HI_0175 (244 aa).

3 residues coordinate Zn(2+): histidine 70, cysteine 105, and histidine 122.

This sequence belongs to the purine nucleoside phosphorylase YfiH/LACC1 family. As to quaternary structure, homodimer. The cofactor is Cu(2+). It depends on Zn(2+) as a cofactor.

The catalysed reaction is adenosine + phosphate = alpha-D-ribose 1-phosphate + adenine. It carries out the reaction S-methyl-5'-thioadenosine + phosphate = 5-(methylsulfanyl)-alpha-D-ribose 1-phosphate + adenine. The enzyme catalyses inosine + phosphate = alpha-D-ribose 1-phosphate + hypoxanthine. It catalyses the reaction adenosine + H2O + H(+) = inosine + NH4(+). Purine nucleoside enzyme that catalyzes the phosphorolysis of adenosine and inosine nucleosides, yielding D-ribose 1-phosphate and the respective free bases, adenine and hypoxanthine. Also catalyzes the phosphorolysis of S-methyl-5'-thioadenosine into adenine and S-methyl-5-thio-alpha-D-ribose 1-phosphate. Also has adenosine deaminase activity. The protein is Purine nucleoside phosphorylase HI_0175 of Haemophilus influenzae (strain ATCC 51907 / DSM 11121 / KW20 / Rd).